Reading from the N-terminus, the 599-residue chain is Endo-1,4-beta-xylanase B (599 aa).

Residues methionine 1–alanine 37 form the signal peptide. In terms of domain architecture, CBM2 spans alanine 38 to alanine 136. Cysteines 39 and 133 form a disulfide. A CBM6 domain is found at leucine 163–valine 289. Residues serine 315–asparagine 595 form the GH10 domain. Residue glutamate 431 is the Proton donor of the active site. Residue glutamate 530 is the Nucleophile of the active site.

The protein belongs to the glycosyl hydrolase 10 (cellulase F) family.

It catalyses the reaction Endohydrolysis of (1-&gt;4)-beta-D-xylosidic linkages in xylans.. It participates in glycan metabolism; hemicellulose degradation. Xylanase B contributes to hydrolyze hemicellulose, the major component of plant cell-walls. The polypeptide is Endo-1,4-beta-xylanase B (xynB) (Cellvibrio japonicus (strain Ueda107) (Pseudomonas fluorescens subsp. cellulosa)).